An 864-amino-acid polypeptide reads, in one-letter code: DNA mismatch repair protein MutS (864 aa).

607 to 614 (GPNMGGKS) is a binding site for ATP.

It belongs to the DNA mismatch repair MutS family.

Functionally, this protein is involved in the repair of mismatches in DNA. It is possible that it carries out the mismatch recognition step. This protein has a weak ATPase activity. The polypeptide is DNA mismatch repair protein MutS (Neisseria gonorrhoeae (strain ATCC 700825 / FA 1090)).